The primary structure comprises 369 residues: tRNA/tmRNA (uracil-C(5))-methyltransferase (369 aa).

The S-adenosyl-L-methionine site is built by Gln-193, Tyr-221, Asn-226, Glu-242, and Asp-302. The active-site Nucleophile is the Cys-327. Residue Glu-361 is the Proton acceptor of the active site.

The protein belongs to the class I-like SAM-binding methyltransferase superfamily. RNA M5U methyltransferase family. TrmA subfamily.

It catalyses the reaction uridine(54) in tRNA + S-adenosyl-L-methionine = 5-methyluridine(54) in tRNA + S-adenosyl-L-homocysteine + H(+). It carries out the reaction uridine(341) in tmRNA + S-adenosyl-L-methionine = 5-methyluridine(341) in tmRNA + S-adenosyl-L-homocysteine + H(+). Dual-specificity methyltransferase that catalyzes the formation of 5-methyluridine at position 54 (m5U54) in all tRNAs, and that of position 341 (m5U341) in tmRNA (transfer-mRNA). This chain is tRNA/tmRNA (uracil-C(5))-methyltransferase, found in Actinobacillus succinogenes (strain ATCC 55618 / DSM 22257 / CCUG 43843 / 130Z).